The chain runs to 487 residues: Glutamyl-tRNA(Gln) amidotransferase subunit A (487 aa).

Residues Lys78 and Ser153 each act as charge relay system in the active site. Catalysis depends on Ser177, which acts as the Acyl-ester intermediate.

The protein belongs to the amidase family. GatA subfamily. As to quaternary structure, heterotrimer of A, B and C subunits.

The enzyme catalyses L-glutamyl-tRNA(Gln) + L-glutamine + ATP + H2O = L-glutaminyl-tRNA(Gln) + L-glutamate + ADP + phosphate + H(+). Allows the formation of correctly charged Gln-tRNA(Gln) through the transamidation of misacylated Glu-tRNA(Gln) in organisms which lack glutaminyl-tRNA synthetase. The reaction takes place in the presence of glutamine and ATP through an activated gamma-phospho-Glu-tRNA(Gln). This is Glutamyl-tRNA(Gln) amidotransferase subunit A from Oenococcus oeni (strain ATCC BAA-331 / PSU-1).